The chain runs to 363 residues: Protein Wnt-5b (363 aa).

Residues 1–21 form the signal peptide; the sequence is MDVRMNQGHLLLAVTLIVCNS. A disulfide bond links cysteine 87 and cysteine 98. Asparagine 97 and asparagine 103 each carry an N-linked (GlcNAc...) asparagine glycan. 10 disulfide bridges follow: cysteine 137–cysteine 145, cysteine 147–cysteine 165, cysteine 221–cysteine 235, cysteine 223–cysteine 230, cysteine 292–cysteine 323, cysteine 308–cysteine 318, cysteine 322–cysteine 362, cysteine 338–cysteine 353, cysteine 340–cysteine 350, and cysteine 345–cysteine 346. A lipid anchor (O-palmitoleoyl serine; by PORCN) is attached at serine 227. 2 N-linked (GlcNAc...) asparagine glycosylation sites follow: asparagine 295 and asparagine 309.

It belongs to the Wnt family. Palmitoleoylation is required for efficient binding to frizzled receptors. Depalmitoleoylation leads to Wnt signaling pathway inhibition.

The protein localises to the secreted. The protein resides in the extracellular space. It is found in the extracellular matrix. Its function is as follows. Ligand for members of the frizzled family of seven transmembrane receptors. Can activate or inhibit canonical Wnt signaling, depending on receptor context. Required during embryogenesis for extension of the primary anterior-posterior axis. Regulates convergent extension movements and hypaxial myogenesis during gastrulation via activation of non-canonical Wnt signaling. This Danio rerio (Zebrafish) protein is Protein Wnt-5b (wnt5b).